We begin with the raw amino-acid sequence, 139 residues long: Transcription antitermination protein NusB (139 aa).

It belongs to the NusB family.

Functionally, involved in transcription antitermination. Required for transcription of ribosomal RNA (rRNA) genes. Binds specifically to the boxA antiterminator sequence of the ribosomal RNA (rrn) operons. This chain is Transcription antitermination protein NusB, found in Sodalis glossinidius (strain morsitans).